Here is a 285-residue protein sequence, read N- to C-terminus: MGAPPPAPRSRLCGAWGPFPRVFAAGAVAADSPGFVEDREQRSGVSDPGSLESGWDRLRQLFAKDEQQRFSKEIDYIYRAAVSAGIIGWAYGGIPAFIYAKKRYIEQSQAEIYHNRFDAVQSAHRAATRGFIRYGWRWSWRTAVFVTIFNTVNTGLTVYRNKDAMSHFAIAGAVTGGLFRINLGVRGLVAGSIIGALLGAPMGSLLMALEKYSGETVQERRQKEWKALHEQRLEEWRSSLQVTELLPMEIESGLEKIQPEGDAQRIEELLSLPRNPSSPHQQSKH.

A run of 4 helical transmembrane segments spans residues 80-100 (AAVS…FIYA), 137-159 (RWSW…LTVY), 165-185 (MSHF…NLGV), and 188-208 (LVAG…LLMA). Residues 265–285 (RIEELLSLPRNPSSPHQQSKH) are disordered. Polar residues predominate over residues 274 to 285 (RNPSSPHQQSKH). At S277 the chain carries Phosphoserine.

It belongs to the Tim17/Tim22/Tim23 family. In terms of assembly, associates with the intermediate 315 kDa subcomplex of incompletely assembled complex I. Interacts with TMEM70.

The protein resides in the mitochondrion membrane. Its function is as follows. Chaperone protein involved in the assembly of the mitochondrial NADH:ubiquinone oxidoreductase complex (complex I). Participates in constructing the membrane arm of complex I. This chain is Complex I assembly factor TIMMDC1, mitochondrial, found in Mus musculus (Mouse).